The following is a 208-amino-acid chain: Small ribosomal subunit protein uS4 (208 aa).

The S4 RNA-binding domain maps to 98-158 (RRLDNVVYRL…EKSRGQLRIK (61 aa)).

Belongs to the universal ribosomal protein uS4 family. As to quaternary structure, part of the 30S ribosomal subunit. Contacts protein S5. The interaction surface between S4 and S5 is involved in control of translational fidelity.

One of the primary rRNA binding proteins, it binds directly to 16S rRNA where it nucleates assembly of the body of the 30S subunit. Its function is as follows. With S5 and S12 plays an important role in translational accuracy. This chain is Small ribosomal subunit protein uS4, found in Magnetococcus marinus (strain ATCC BAA-1437 / JCM 17883 / MC-1).